The sequence spans 71 residues: Cruzioseptin-2 (71 aa).

An N-terminal signal peptide occupies residues Met-1–Cys-22. Residues Glu-23–Glu-43 constitute a propeptide that is removed on maturation. Gln-68 is subject to Glutamine amide. The propeptide occupies Glu-70–Gln-71.

In terms of tissue distribution, expressed by the skin glands.

Its subcellular location is the secreted. In terms of biological role, has antimicrobial activity against Gram-negative bacterium E.coli (MIC=26.35 uM), against Gram-positive bacterium S.aureus (MIC=6.59 uM) and against fungus C.albicans (MIC=13.18 uM). At higher concentrations also has a bactericidal and fungicidal effect. Has hemagglutinating activity against horse erythrocytes. This Cruziohyla calcarifer (Splendid leaf frog) protein is Cruzioseptin-2.